The following is a 576-amino-acid chain: Proline--tRNA ligase (576 aa).

This sequence belongs to the class-II aminoacyl-tRNA synthetase family. ProS type 1 subfamily. In terms of assembly, homodimer.

The protein localises to the cytoplasm. It catalyses the reaction tRNA(Pro) + L-proline + ATP = L-prolyl-tRNA(Pro) + AMP + diphosphate. In terms of biological role, catalyzes the attachment of proline to tRNA(Pro) in a two-step reaction: proline is first activated by ATP to form Pro-AMP and then transferred to the acceptor end of tRNA(Pro). As ProRS can inadvertently accommodate and process non-cognate amino acids such as alanine and cysteine, to avoid such errors it has two additional distinct editing activities against alanine. One activity is designated as 'pretransfer' editing and involves the tRNA(Pro)-independent hydrolysis of activated Ala-AMP. The other activity is designated 'posttransfer' editing and involves deacylation of mischarged Ala-tRNA(Pro). The misacylated Cys-tRNA(Pro) is not edited by ProRS. The sequence is that of Proline--tRNA ligase from Thiobacillus denitrificans (strain ATCC 25259 / T1).